We begin with the raw amino-acid sequence, 406 residues long: S-adenosylmethionine synthase (406 aa).

140–145 (GRGSVD) is a binding site for ATP.

Belongs to the AdoMet synthase 2 family. Requires Mg(2+) as cofactor.

The catalysed reaction is L-methionine + ATP + H2O = S-adenosyl-L-methionine + phosphate + diphosphate. It functions in the pathway amino-acid biosynthesis; S-adenosyl-L-methionine biosynthesis; S-adenosyl-L-methionine from L-methionine: step 1/1. Functionally, catalyzes the formation of S-adenosylmethionine from methionine and ATP. The sequence is that of S-adenosylmethionine synthase (mat) from Aeropyrum pernix (strain ATCC 700893 / DSM 11879 / JCM 9820 / NBRC 100138 / K1).